Here is a 67-residue protein sequence, read N- to C-terminus: ATP synthase F(0) complex subunit 8 (67 aa).

The helical transmembrane segment at 8-24 (TWFTTILATITTLFILF) threads the bilayer. Lys54 is modified (N6-acetyllysine; alternate). Position 54 is an N6-succinyllysine; alternate (Lys54). At Lys57 the chain carries N6-acetyllysine.

It belongs to the ATPase protein 8 family. As to quaternary structure, component of the ATP synthase complex composed at least of ATP5F1A/subunit alpha, ATP5F1B/subunit beta, ATP5MC1/subunit c (homooctomer), MT-ATP6/subunit a, MT-ATP8/subunit 8, ATP5ME/subunit e, ATP5MF/subunit f, ATP5MG/subunit g, ATP5MK/subunit k, ATP5MJ/subunit j, ATP5F1C/subunit gamma, ATP5F1D/subunit delta, ATP5F1E/subunit epsilon, ATP5PF/subunit F6, ATP5PB/subunit b, ATP5PD/subunit d, ATP5PO/subunit OSCP. ATP synthase complex consists of a soluble F(1) head domain (subunits alpha(3) and beta(3)) - the catalytic core - and a membrane F(0) domain - the membrane proton channel (subunits c, a, 8, e, f, g, k and j). These two domains are linked by a central stalk (subunits gamma, delta, and epsilon) rotating inside the F1 region and a stationary peripheral stalk (subunits F6, b, d, and OSCP). Interacts with PRICKLE3.

It localises to the mitochondrion membrane. Its function is as follows. Subunit 8, of the mitochondrial membrane ATP synthase complex (F(1)F(0) ATP synthase or Complex V) that produces ATP from ADP in the presence of a proton gradient across the membrane which is generated by electron transport complexes of the respiratory chain. ATP synthase complex consist of a soluble F(1) head domain - the catalytic core - and a membrane F(1) domain - the membrane proton channel. These two domains are linked by a central stalk rotating inside the F(1) region and a stationary peripheral stalk. During catalysis, ATP synthesis in the catalytic domain of F(1) is coupled via a rotary mechanism of the central stalk subunits to proton translocation. In vivo, can only synthesize ATP although its ATP hydrolase activity can be activated artificially in vitro. Part of the complex F(0) domain. The chain is ATP synthase F(0) complex subunit 8 from Talpa europaea (European mole).